Consider the following 326-residue polypeptide: HTH-type transcriptional regulator SyrM (326 aa).

The 58-residue stretch at 32-89 (IDLNLLVDLEALLQYRHITQAAQHVGRSQPAMSRALSRLRGMLKDDLLVAGSRGLVLT) folds into the HTH lysR-type domain. The segment at residues 49–68 (ITQAAQHVGRSQPAMSRALS) is a DNA-binding region (H-T-H motif).

It belongs to the LysR transcriptional regulatory family.

In terms of biological role, acts in trans to stimulate nod gene expression via nodD3 and exo gene expression via SyrA. This is HTH-type transcriptional regulator SyrM (syrM) from Rhizobium meliloti (strain 1021) (Ensifer meliloti).